The sequence spans 100 residues: Small ribosomal subunit protein bS18c (100 aa).

Residues 81–100 (KQFERTESTPRTTGPRTRKK) form a disordered region. Positions 89-100 (TPRTTGPRTRKK) are enriched in low complexity.

Belongs to the bacterial ribosomal protein bS18 family. Part of the 30S ribosomal subunit.

Its subcellular location is the plastid. The protein localises to the chloroplast. The sequence is that of Small ribosomal subunit protein bS18c from Nandina domestica (Heavenly bamboo).